We begin with the raw amino-acid sequence, 353 residues long: MEVLRQMLVHKANNSSMSTHKGLNRTEPVRMTYDHCELLGQLSTLNFSAASNTFSSGYNTTIKGSAPKTIQTVSSLFSKDITKAMSDIGNLVARMFPTASAERAAVILDITVFGFIADDLLEDAALSSDSEAFDKLHMLMLRLVRNDSFSEDEYPEYQNLIRFTRPIFTKFQALASRTLLNRFAYTYQEYLQGVQWEASLQPNQIPDFETCKNVKRHVGAWLCYFVLAEFAREIEVPITVRGNLEVQKFVTLACDIASYDNDTFLLKKEIRDGVVSNTIVITYLHGAKRLQDALDRILEMRKQTESEILAITSNLPHFGKDDKVAREYINALTCVIGGNFEWCSKTTRYQDPK.

Mg(2+) contacts are provided by aspartate 118, asparagine 261, and glutamate 269. Residues 118 to 122 (DDLLE) carry the D(D/E)XX(D/E) motif motif. The short motif at 261–269 (NDTFLLKKE) is the NSE motif element. The WxxxxxRY motif signature appears at 342 to 349 (WCSKTTRY).

It belongs to the terpene synthase family. The cofactor is Mg(2+).

In terms of biological role, terpene synthase that may be involved in the production of volatile terpenoids. Does not show detectable terpene products with either farnesyl diphosphate (FPP) or geranyl diphosphate (GPP). P.polycephalum has a unique biology and these volatile terpenoids could function in internal communication of P.polycephalum, to mark the territory that have been explored, or they may be involved in chemotaxis. The polypeptide is Terpene synthase 3 (Physarum polycephalum (Slime mold)).